The primary structure comprises 137 residues: Large ribosomal subunit protein uL16c (137 aa).

Belongs to the universal ribosomal protein uL16 family. Part of the 50S ribosomal subunit.

The protein localises to the plastid. It is found in the chloroplast. The protein is Large ribosomal subunit protein uL16c of Adiantum capillus-veneris (Maidenhair fern).